The following is a 445-amino-acid chain: MREIVHIQAGQCGNQIGAKFWEVISDEHGIDPSGTYCGDSDLQLERVDVFYNEATGGRYVPRAILMDLEPGTMDSVRAGPFGQLFRPDNFVFGQTGAGNNWAKGHYTEGAELIDAVLDVVRKEAEGCDCLQGFQITHSLGGGTGSGMGTLLISKIREEYPDRIMETFSVFPSPKVSDTVVEPYNATLSVHQLVENADEVQVIDNEALYDICFRTLKLTTPTYGDLNHLVSAAMSGVTCSLRFPGQLNSDLRKLAVNLIPFPRLHFFMIGFAPLTSRGSQQYRALTVPELTQQMFDAKNMMCASDPRHGRYLTACAMFRGRMSTKEVDEQMLNVQNKNSSYFVEWIPHNTKSSVCDIPPKGLKMAVTFVGNSTAIQEMFKRVSDQFTAMFRRKAFLHWYTGEGMDEMEFTEAESNMNDLVSEYQQYQDATAEEEGEFEEEEGDVEA.

The GTP site is built by Gln11, Glu69, Ser138, Gly142, Thr143, Gly144, Asn204, and Asn226. Glu69 lines the Mg(2+) pocket. The tract at residues 426 to 445 is disordered; the sequence is QDATAEEEGEFEEEEGDVEA. The span at 429-445 shows a compositional bias: acidic residues; it reads TAEEEGEFEEEEGDVEA.

This sequence belongs to the tubulin family. Dimer of alpha and beta chains. A typical microtubule is a hollow water-filled tube with an outer diameter of 25 nm and an inner diameter of 15 nM. Alpha-beta heterodimers associate head-to-tail to form protofilaments running lengthwise along the microtubule wall with the beta-tubulin subunit facing the microtubule plus end conferring a structural polarity. Microtubules usually have 13 protofilaments but different protofilament numbers can be found in some organisms and specialized cells. Interacts with DCX/apicortin; the interaction stabilizes microtubule assembly. Requires Mg(2+) as cofactor.

It is found in the cytoplasm. The protein resides in the cytoskeleton. In terms of biological role, tubulin is the major constituent of microtubules, a cylinder consisting of laterally associated linear protofilaments composed of alpha- and beta-tubulin heterodimers. Microtubules grow by the addition of GTP-tubulin dimers to the microtubule end, where a stabilizing cap forms. Below the cap, tubulin dimers are in GDP-bound state, owing to GTPase activity of alpha-tubulin. The chain is Tubulin beta chain from Plasmodium falciparum (isolate 3D7).